The chain runs to 587 residues: Branchpoint-bridging protein (587 aa).

The segment covering 1–16 (MLNSRSVGSTGSNNTP) has biased composition (polar residues). Disordered regions lie at residues 1 to 64 (MLNS…DGRG) and 121 to 142 (GDVVPHHRERSPSPPPQYDNHG). Positions 44–64 (DSYKSNSRMDHRPDGYHDGRG) are enriched in basic and acidic residues. Serine 131 and serine 133 each carry phosphoserine. The KH domain maps to 191–271 (YVPVKDYPEI…DKINHAIKLI (81 aa)). CCHC-type zinc fingers lie at residues 309–326 (QVCQNCGNVGHRRFDCPE) and 334–351 (IVCRHCGSIGHIARDCPV). 2 disordered regions span residues 375-490 (GGGS…PGTS) and 551-587 (IPGATAPPGAPGSYNTSESSNLNAPPGVSMPNGYSNR). Over residues 379–399 (AISNGNGEPQKSIEFSESGAA) the composition is skewed to polar residues. Low complexity predominate over residues 410–454 (AAASTSVSSSTSSPAPWAKPASSAAPSNPAPWQQPAAPQSAPALS). 2 stretches are compositionally biased toward polar residues: residues 465–483 (QPTQQSAVQPSNLVPSQNA) and 563–573 (SYNTSESSNLN).

This sequence belongs to the BBP/SF1 family. U2AF large subunit (u2af59), U2AF small subunit (u2af23) and bpb1 interact to form a complex required for complex A formation.

It is found in the cytoplasm. Its subcellular location is the nucleus. Its function is as follows. Necessary for the splicing of pre-mRNA. The BPB1(SF1)-u2af59-u2af23 complex has a role in the recognition of the branch site (5'-UACUAAC-3'), the pyrimidine tract and the 3'-splice site at the 3'-end of introns. The protein is Branchpoint-bridging protein (bpb1) of Schizosaccharomyces pombe (strain 972 / ATCC 24843) (Fission yeast).